Here is a 516-residue protein sequence, read N- to C-terminus: Protein psiC (516 aa).

Positions 1–19 are cleaved as a signal peptide; the sequence is MKILILSFFLILGINLVFC. Residues 109-249 form the PA14 domain; the sequence is ESKDEPGIYV…YDACGVCLGK (141 aa). Residues asparagine 134, asparagine 234, asparagine 250, asparagine 284, asparagine 333, asparagine 357, and asparagine 367 are each glycosylated (N-linked (GlcNAc...) asparagine). A compositionally biased stretch (low complexity) spans 418–427; the sequence is DIIIDSSSDI. The interval 418-465 is disordered; that stretch reads DIIIDSSSDIPIPTLSPSPQPSRFPTDTPTNTPMPPTRPPTPTEDPKI. Pro residues predominate over residues 449–460; the sequence is TPMPPTRPPTPT.

It belongs to the prespore-cell-inducing factor family.

It localises to the secreted. This Dictyostelium discoideum (Social amoeba) protein is Protein psiC (psiC).